Consider the following 435-residue polypeptide: WD repeat domain phosphoinositide-interacting protein 2 (435 aa).

Residues 182–222 form a WD 1 repeat; it reads AHDSPLAALAFDASGTKLATASEKGTVIRVFSIPEGQKLFE. Residues 223-226 carry the L/FRRG motif motif; sequence FRRG. WD repeat units follow at residues 228-267 and 311-349; these read KRCVSICSLAFSMDSIFLSASSNTETVHIFKLETIKEKPP and GHKNICALATIQKISRLLVGAADGYLYIYNFDPQEGGEC. A disordered region spans residues 386 to 435; that stretch reads VTKTYPPPSPTRHAYADDLGAVGGASEEDEMGNLRLDEDNENPPMILQTE.

This sequence belongs to the WD repeat PROPPIN family.

The protein localises to the preautophagosomal structure membrane. In terms of biological role, component of the autophagy machinery that controls the major intracellular degradation process by which cytoplasmic materials are packaged into autophagosomes and delivered to lysosomes for degradation. Involved in an early step of the formation of preautophagosomal structures. This is WD repeat domain phosphoinositide-interacting protein 2 (wipi2) from Xenopus laevis (African clawed frog).